Here is a 267-residue protein sequence, read N- to C-terminus: Tryptophan synthase alpha chain (267 aa).

Active-site proton acceptor residues include Glu49 and Asp60.

The protein belongs to the TrpA family. Tetramer of two alpha and two beta chains.

It carries out the reaction (1S,2R)-1-C-(indol-3-yl)glycerol 3-phosphate + L-serine = D-glyceraldehyde 3-phosphate + L-tryptophan + H2O. It participates in amino-acid biosynthesis; L-tryptophan biosynthesis; L-tryptophan from chorismate: step 5/5. In terms of biological role, the alpha subunit is responsible for the aldol cleavage of indoleglycerol phosphate to indole and glyceraldehyde 3-phosphate. The sequence is that of Tryptophan synthase alpha chain from Pelobacter propionicus (strain DSM 2379 / NBRC 103807 / OttBd1).